A 307-amino-acid polypeptide reads, in one-letter code: Follistatin-related protein 1 (307 aa).

An N-terminal signal peptide occupies residues 1 to 19 (MMWRRWLALALVAVAWVHA). The Follistatin-like domain occupies 29-52 (ICANVFCGAGRECAVTEKGEPTCL). Cystine bridges form between Cys-30–Cys-41, Cys-35–Cys-51, Cys-53–Cys-83, Cys-57–Cys-76, and Cys-65–Cys-97. One can recognise a Kazal-like domain in the interval 47-99 (GEPTCLCIEQCKPHKRPVCGSNGKTYLNHCELHRDACLTGSKIQVDYDGHCKE). Asn-143 is a glycosylation site (N-linked (GlcNAc...) asparagine). The EF-hand 1 domain maps to 143 to 177 (NYSEILDKYFKNFDNGDSRLDSSEFLKFVEQNETA). Ser-164 carries the post-translational modification Phosphoserine. Residues Asn-174 and Asn-179 are each glycosylated (N-linked (GlcNAc...) asparagine). The EF-hand 2 domain occupies 192 to 227 (LRGLCVDALIELSDENADWKLSFQEFLKCLNPSFNP). The region spanning 232–286 (CALEDETYADGAETEVDCNRCVCACGNWVCTAMTCDGKNQKGAQTQAEEEMTRYV) is the VWFC domain.

Homodimer. Interacts with SCN10A. Interacts with DIP2A; DIP2A may act as a cell surface receptor for FSTL1. Interacts with BMP4. Interacts with CD14; this interaction promotes TL4-mediated signaling cascade.

The protein localises to the secreted. Its function is as follows. Secreted glycoprotein that is involved in various physiological processes, such as angiogenesis, regulation of the immune response, cell proliferation and differentiation. Plays a role in the development of the central nervous system, skeletal system, lungs, and ureter. Promotes endothelial cell survival, migration and differentiation into network structures in an AKT-dependent manner. Also promotes survival of cardiac myocytes. Initiates various signaling cascades by activating different receptors on the cell surface such as DIP2A, TLR4 or BMP receptors. This Bos taurus (Bovine) protein is Follistatin-related protein 1 (FSTL1).